The sequence spans 252 residues: Type III pantothenate kinase (252 aa).

6–13 (DVGNTHTT) is a binding site for ATP. Residue 104 to 107 (GADR) coordinates substrate. Catalysis depends on Asp106, which acts as the Proton acceptor. Residue Asp126 coordinates K(+). Thr129 provides a ligand contact to ATP. Thr180 is a binding site for substrate.

The protein belongs to the type III pantothenate kinase family. In terms of assembly, homodimer. It depends on NH4(+) as a cofactor. Requires K(+) as cofactor.

The protein localises to the cytoplasm. It catalyses the reaction (R)-pantothenate + ATP = (R)-4'-phosphopantothenate + ADP + H(+). Its pathway is cofactor biosynthesis; coenzyme A biosynthesis; CoA from (R)-pantothenate: step 1/5. Functionally, catalyzes the phosphorylation of pantothenate (Pan), the first step in CoA biosynthesis. In Fervidobacterium nodosum (strain ATCC 35602 / DSM 5306 / Rt17-B1), this protein is Type III pantothenate kinase.